A 465-amino-acid chain; its full sequence is Sodium-dependent phosphate transport protein 1 (465 aa).

3 N-linked (GlcNAc...) asparagine glycosylation sites follow: Asn-39, Asn-47, and Asn-56. 10 helical membrane passes run 79–99 (GLVL…VGYL), 117–137 (SVLS…VIVC), 176–196 (FVMG…LLGW), 199–219 (VFYI…ILLF), 260–280 (LPLW…NLLV), 299–319 (GLLS…AGQM), 337–357 (LFTT…LYLS), 363–383 (TVIF…GQLI), 399–419 (VTAL…GLIL), and 431–451 (FFLM…FAKG).

This sequence belongs to the major facilitator superfamily. Sodium/anion cotransporter family. In terms of assembly, interacts with PDZK1.

Its subcellular location is the apical cell membrane. It catalyses the reaction 3 Na(+)(out) + phosphate(out) = 3 Na(+)(in) + phosphate(in). The enzyme catalyses urate(out) = urate(in). Functionally, important for the resorption of phosphate by the kidney. May be involved in actively transporting phosphate into cells via Na(+) cotransport in the renal brush border membrane. Plays a role in urate transport in the kidney. The chain is Sodium-dependent phosphate transport protein 1 (Slc17a1) from Rattus norvegicus (Rat).